The sequence spans 561 residues: Membrane protein insertase YidC (561 aa).

Helical transmembrane passes span 7-27 (ILIV…NQDY), 342-362 (LELT…FWLL), 368-388 (LLGN…GLFF), 438-458 (LGGC…YWVL), 469-489 (WMLW…PIIM), and 516-536 (PIIF…YWVV).

This sequence belongs to the OXA1/ALB3/YidC family. Type 1 subfamily. Interacts with the Sec translocase complex via SecD. Specifically interacts with transmembrane segments of nascent integral membrane proteins during membrane integration.

The protein localises to the cell inner membrane. Required for the insertion and/or proper folding and/or complex formation of integral membrane proteins into the membrane. Involved in integration of membrane proteins that insert both dependently and independently of the Sec translocase complex, as well as at least some lipoproteins. Aids folding of multispanning membrane proteins. The polypeptide is Membrane protein insertase YidC (Pseudomonas entomophila (strain L48)).